Here is a 104-residue protein sequence, read N- to C-terminus: N(4)-acetylcytidine amidohydrolase (104 aa).

Residues 7–93 enclose the ASCH domain; it reads MTFFSRFEAD…EVIQEIYPGI (87 aa). Residue Lys-22 is the Proton acceptor of the active site. Residue Thr-25 is the Nucleophile of the active site. Glu-75 functions as the Proton donor in the catalytic mechanism.

The protein belongs to the N(4)-acetylcytidine amidohydrolase family.

The catalysed reaction is N(4)-acetylcytidine + H2O = cytidine + acetate + H(+). It catalyses the reaction N(4)-acetyl-2'-deoxycytidine + H2O = 2'-deoxycytidine + acetate + H(+). The enzyme catalyses N(4)-acetylcytosine + H2O = cytosine + acetate + H(+). In terms of biological role, catalyzes the hydrolysis of N(4)-acetylcytidine (ac4C). The polypeptide is N(4)-acetylcytidine amidohydrolase (Vibrio vulnificus (strain YJ016)).